Reading from the N-terminus, the 785-residue chain is Solute carrier family 45 member 4 (785 aa).

A disordered region spans residues 1-43 (MKMAPQNADSESMQVQELPVPLPDPQKPRDPEAETQEETTSEG). 6 helical membrane passes run 64 to 84 (EFCY…IGLP), 87 to 107 (YYSL…PLIG), 124 to 144 (ILAL…GSAI), 156 to 176 (PIGI…ADAT), 197 to 217 (LNIH…LGGL), and 234 to 254 (VLFF…LFSI). Disordered stretches follow at residues 259–309 (YSPQ…VQSE) and 401–430 (KVPN…SGSM). A phosphoserine mark is found at S442 and S472. A disordered region spans residues 478–505 (DLQQRQRSRHRNQSGATASSGDTESEEG). Over residues 490 to 499 (QSGATASSGD) the composition is skewed to low complexity. Position 502 is a phosphoserine (S502). Helical transmembrane passes span 525 to 545 (LMWL…EAVF), 577 to 597 (MGCW…ALLQ), 609 to 629 (IIYM…AMFP), 631 to 651 (VYVA…ISYC), 683 to 703 (ILSC…GGVV), and 709 to 729 (IVVI…TATF). The segment at 741 to 772 (KEEQKGLSSGPAGEGEGGAGSEKPTVLKLSRK) is disordered. S749 bears the Phosphoserine mark.

It belongs to the glycoside-pentoside-hexuronide (GPH) cation symporter transporter (TC 2.A.2) family. Ubiquitously expressed.

It localises to the membrane. The catalysed reaction is sucrose(out) + H(+)(out) = sucrose(in) + H(+)(in). Proton-associated sucrose transporter. May be able to transport also glucose and fructose. The polypeptide is Solute carrier family 45 member 4 (Slc45a4) (Mus musculus (Mouse)).